Reading from the N-terminus, the 261-residue chain is Ribosome-inactivating protein PD-L3/PD-L4 (261 aa).

Asn-10 is a glycosylation site (N-linked (GlcNAc...) asparagine; in PD-L3). 2 disulfides stabilise this stretch: Cys-34–Cys-258 and Cys-84–Cys-105. Glu-175 is a catalytic residue.

Belongs to the ribosome-inactivating protein family. Type 1 RIP subfamily.

The catalysed reaction is Endohydrolysis of the N-glycosidic bond at one specific adenosine on the 28S rRNA.. In terms of biological role, inhibits protein synthesis. Does not cleave supercoiled pBR322 dsDNA. The chain is Ribosome-inactivating protein PD-L3/PD-L4 from Phytolacca dioica (Bella sombra tree).